A 633-amino-acid polypeptide reads, in one-letter code: Polypeptide N-acetylgalactosaminyltransferase 3 (633 aa).

The Cytoplasmic segment spans residues 1–19 (MAHLKRLVKLHIKRHYHKK). A helical; Signal-anchor for type II membrane protein membrane pass occupies residues 20-37 (FWKLGAVIFFFIIVLVLM). Residues 38 to 633 (QREVSVQYSK…LQKWILSQND (596 aa)) lie on the Lumenal side of the membrane. A glycan (N-linked (GlcNAc...) asparagine) is linked at asparagine 132. The tract at residues 184–293 (LPTTSVIIVF…YGWLEPLLAR (110 aa)) is catalytic subdomain A. Residues aspartate 277 and histidine 279 each contribute to the Mn(2+) site. N-linked (GlcNAc...) asparagine glycosylation occurs at asparagine 297. Residues 356–418 (PIKTPTFAGG…PCSVVGHVFR (63 aa)) are catalytic subdomain B. Histidine 415 contacts Mn(2+). A glycan (N-linked (GlcNAc...) asparagine) is linked at asparagine 484. One can recognise a Ricin B-type lectin domain in the interval 504 to 630 (VISGYIKSVG…SDPLQKWILS (127 aa)). Cysteine 517 and cysteine 535 form a disulfide bridge. UDP-N-acetyl-alpha-D-galactosamine-binding residues include aspartate 519, glutamate 522, histidine 536, and asparagine 541. Cystine bridges form between cysteine 561–cysteine 574 and cysteine 605–cysteine 618.

Belongs to the glycosyltransferase 2 family. GalNAc-T subfamily. Mn(2+) is required as a cofactor. In terms of tissue distribution, expressed in organs that contain secretory epithelial glands. Highly expressed in pancreas, skin, kidney and testis. Weakly expressed in prostate, ovary, intestine and colon. Also expressed in placenta and lung and fetal lung and fetal kidney.

It is found in the golgi apparatus. Its subcellular location is the golgi stack membrane. It catalyses the reaction L-seryl-[protein] + UDP-N-acetyl-alpha-D-galactosamine = a 3-O-[N-acetyl-alpha-D-galactosaminyl]-L-seryl-[protein] + UDP + H(+). The enzyme catalyses L-threonyl-[protein] + UDP-N-acetyl-alpha-D-galactosamine = a 3-O-[N-acetyl-alpha-D-galactosaminyl]-L-threonyl-[protein] + UDP + H(+). It functions in the pathway protein modification; protein glycosylation. Catalyzes the initial reaction in O-linked oligosaccharide biosynthesis, the transfer of an N-acetyl-D-galactosamine residue to a serine or threonine residue on the protein receptor. Has activity toward HIV envelope glycoprotein gp120, EA2, MUC2, MUC1A and MUC5AC. Probably glycosylates fibronectin in vivo. Glycosylates FGF23. The protein is Polypeptide N-acetylgalactosaminyltransferase 3 (GALNT3) of Homo sapiens (Human).